Reading from the N-terminus, the 280-residue chain is MKIKAYAKINIALDIVGKREDGYHILKMIMQTIDLYDIIEIEKTESEIRLNCNKHYVPTDERNLAYKAAKIFKETYSISQGVDIKLTKNIPVSAGLAGGSTDAAGVLKLMNKMFNVNASDEELKSIGLRLGADVPYCIKGGTALCEGIGEKITQLKSFKDKIIVLVKPPFGVSTKEVYKCFDLSKVVFHPKIDSLIENMNNDDVYFVANNMKNLLENVTLRKHRVITNIKEEMKSIGSIGTMMSGSGPTVFALFDDMLKAQLCYDEMKKKYKDVFITRTI.

Lys8 is an active-site residue. 91–101 (PVSAGLAGGST) lines the ATP pocket. Residue Asp133 is part of the active site.

It belongs to the GHMP kinase family. IspE subfamily.

The catalysed reaction is 4-CDP-2-C-methyl-D-erythritol + ATP = 4-CDP-2-C-methyl-D-erythritol 2-phosphate + ADP + H(+). The protein operates within isoprenoid biosynthesis; isopentenyl diphosphate biosynthesis via DXP pathway; isopentenyl diphosphate from 1-deoxy-D-xylulose 5-phosphate: step 3/6. Catalyzes the phosphorylation of the position 2 hydroxy group of 4-diphosphocytidyl-2C-methyl-D-erythritol. The protein is 4-diphosphocytidyl-2-C-methyl-D-erythritol kinase of Clostridium beijerinckii (strain ATCC 51743 / NCIMB 8052) (Clostridium acetobutylicum).